A 343-amino-acid polypeptide reads, in one-letter code: Adenine deaminase (343 aa).

Positions 17, 19, and 197 each coordinate Zn(2+). Glu200 (proton donor) is an active-site residue. Asp278 provides a ligand contact to Zn(2+). Position 279 (Asp279) interacts with substrate.

Belongs to the metallo-dependent hydrolases superfamily. Adenosine and AMP deaminases family. Adenine deaminase type 2 subfamily. It depends on Zn(2+) as a cofactor.

It catalyses the reaction adenine + H2O + H(+) = hypoxanthine + NH4(+). Functionally, catalyzes the hydrolytic deamination of adenine to hypoxanthine. Plays an important role in the purine salvage pathway and in nitrogen catabolism. This is Adenine deaminase from Rhodopseudomonas palustris (strain BisB18).